Reading from the N-terminus, the 511-residue chain is Histidine ammonia-lyase (511 aa).

The segment at residues 142-144 (ASG) is a cross-link (5-imidazolinone (Ala-Gly)). Position 143 is a 2,3-didehydroalanine (Ser) (Ser-143).

It belongs to the PAL/histidase family. Post-translationally, contains an active site 4-methylidene-imidazol-5-one (MIO), which is formed autocatalytically by cyclization and dehydration of residues Ala-Ser-Gly.

Its subcellular location is the cytoplasm. The catalysed reaction is L-histidine = trans-urocanate + NH4(+). It functions in the pathway amino-acid degradation; L-histidine degradation into L-glutamate; N-formimidoyl-L-glutamate from L-histidine: step 1/3. The sequence is that of Histidine ammonia-lyase from Rhizobium rhizogenes (Agrobacterium rhizogenes).